Reading from the N-terminus, the 406-residue chain is Luteothin monooxygenase (406 aa).

Residues histidine 98, arginine 102, arginine 296, glycine 350, histidine 353, and cysteine 355 each contribute to the heme b site.

The protein belongs to the cytochrome P450 family. In terms of assembly, monomer. The cofactor is heme b.

It carries out the reaction luteothin + 4 reduced [2Fe-2S]-[ferredoxin] + 2 O2 + 4 H(+) = aureothin + 4 oxidized [2Fe-2S]-[ferredoxin] + 3 H2O. Its pathway is antibiotic biosynthesis. It functions in the pathway polyketide biosynthesis. In terms of biological role, bifunctional cytochrome P450 protein involved in the biosynthesis of the antibiotic aureothin, a nitroaryl polyketide metabolite with antifungal, cytotoxic and insecticidal activities. Catalyzes the hydroxylation of luteothin (also called deoxyaureothin), leading to the formation of the intermediate (7R)-7-hydroxydeoxyaureothin, followed by the formation of the aureothin tetrahydrofuran ring, the final step in the biosynthesis of aureothin. In Streptomyces thioluteus, this protein is Luteothin monooxygenase.